Here is a 339-residue protein sequence, read N- to C-terminus: DNA-directed RNA polymerase subunit alpha (339 aa).

Residues 1 to 235 (MVIQKNWQEL…DQLQIFVNFE (235 aa)) form an alpha N-terminal domain (alpha-NTD) region. An alpha C-terminal domain (alpha-CTD) region spans residues 251-339 (FNPALLKKVD…DLAKRFEEHY (89 aa)).

It belongs to the RNA polymerase alpha chain family. Homodimer. The RNAP catalytic core consists of 2 alpha, 1 beta, 1 beta' and 1 omega subunit. When a sigma factor is associated with the core the holoenzyme is formed, which can initiate transcription.

It carries out the reaction RNA(n) + a ribonucleoside 5'-triphosphate = RNA(n+1) + diphosphate. DNA-dependent RNA polymerase catalyzes the transcription of DNA into RNA using the four ribonucleoside triphosphates as substrates. The polypeptide is DNA-directed RNA polymerase subunit alpha (Methylobacterium nodulans (strain LMG 21967 / CNCM I-2342 / ORS 2060)).